The following is a 272-amino-acid chain: Elongation factor Ts (272 aa).

The tract at residues 76-79 (TDFV) is involved in Mg(2+) ion dislocation from EF-Tu.

It belongs to the EF-Ts family.

The protein resides in the cytoplasm. Its function is as follows. Associates with the EF-Tu.GDP complex and induces the exchange of GDP to GTP. It remains bound to the aminoacyl-tRNA.EF-Tu.GTP complex up to the GTP hydrolysis stage on the ribosome. The chain is Elongation factor Ts from Corynebacterium urealyticum (strain ATCC 43042 / DSM 7109).